Reading from the N-terminus, the 383-residue chain is S-adenosylmethionine synthase (383 aa).

His-15 lines the ATP pocket. Asp-17 provides a ligand contact to Mg(2+). Glu-43 contributes to the K(+) binding site. L-methionine is bound by residues Glu-56 and Gln-99. Positions 99-109 (QSSDINQGVDR) are flexible loop. ATP is bound by residues 164–166 (DAK), 230–231 (RF), Asp-239, 245–246 (RK), Ala-262, and Lys-266. L-methionine is bound at residue Asp-239. Residue Lys-270 coordinates L-methionine.

This sequence belongs to the AdoMet synthase family. In terms of assembly, homotetramer; dimer of dimers. Requires Mg(2+) as cofactor. K(+) serves as cofactor.

Its subcellular location is the cytoplasm. The catalysed reaction is L-methionine + ATP + H2O = S-adenosyl-L-methionine + phosphate + diphosphate. The protein operates within amino-acid biosynthesis; S-adenosyl-L-methionine biosynthesis; S-adenosyl-L-methionine from L-methionine: step 1/1. In terms of biological role, catalyzes the formation of S-adenosylmethionine (AdoMet) from methionine and ATP. The overall synthetic reaction is composed of two sequential steps, AdoMet formation and the subsequent tripolyphosphate hydrolysis which occurs prior to release of AdoMet from the enzyme. The protein is S-adenosylmethionine synthase of Mannheimia succiniciproducens (strain KCTC 0769BP / MBEL55E).